The primary structure comprises 170 residues: MRQRGFTLLEMMLILLLMGVSAGMVLLAFPASRDDSAAQTLARFEAQLRFVQQRGLQTGQFFGVSVHPDRWQFLVLEARDGADPAPADDGWSGYRWLPLRAGRVATSGSIAGGKLNLAFAQGEAWTPGDNPDVLIFPGGEMTPFRLTLGEAPGIAFNARGESLPEPQEAQ.

The propeptide at 1-5 is leader sequence; the sequence is MRQRG. An N-methylphenylalanine modification is found at Phe-6. A helical membrane pass occupies residues 6–29; that stretch reads FTLLEMMLILLLMGVSAGMVLLAF.

This sequence belongs to the GSP H family. In terms of assembly, type II secretion is composed of four main components: the outer membrane complex, the inner membrane complex, the cytoplasmic secretion ATPase and the periplasm-spanning pseudopilus. Interacts with core component PulG. In terms of processing, cleaved by prepilin peptidase. Post-translationally, methylated by prepilin peptidase at the amino group of the N-terminal phenylalanine once the leader sequence is cleaved by prepilin peptidase.

It is found in the cell inner membrane. In terms of biological role, component of the type II secretion system required for the energy-dependent secretion of extracellular factors such as proteases and toxins from the periplasm. Part of the pseudopilus tip complex that is critical for the recognition and binding of secretion substrates. This is Type II secretion system protein H (pulH) from Klebsiella pneumoniae.